Consider the following 671-residue polypeptide: Major S-layer protein (671 aa).

Residues 1–24 (MKRFAALSLAALMLLTVFASAASA) form the signal peptide. N-linked (GlcNAc...) asparagine glycosylation is found at Asn-36, Asn-70, Asn-116, and Asn-350. Residues 594–650 (GEEVSGEEETPEETPTGEVTETEGEEETPTEVTETPTEGEPAPEETETTESEGTTPG) are disordered. A compositionally biased stretch (acidic residues) spans 613–622 (TETEGEEETP). Low complexity predominate over residues 623 to 633 (TEVTETPTEGE). Positions 634 to 643 (PAPEETETTE) are enriched in acidic residues. A helical membrane pass occupies residues 647-667 (TTPGFGFMFGLVGLLAVVYLV).

Belongs to the Methanosarcinales S-layer protein family. In terms of processing, glycosylated.

It localises to the secreted. The protein resides in the cell wall. Its subcellular location is the S-layer. It is found in the cell membrane. Functionally, S-layer protein. The S-layer is a paracrystalline mono-layered assembly of proteins which coat the surface of the cell. The protein is Major S-layer protein of Methanosarcina acetivorans (strain ATCC 35395 / DSM 2834 / JCM 12185 / C2A).